Reading from the N-terminus, the 39-residue chain is Photosystem II reaction center protein J (39 aa).

A helical membrane pass occupies residues 9 to 29 (LWLVGLVGGFAVITIVSLFIY).

It belongs to the PsbJ family. As to quaternary structure, PSII is composed of 1 copy each of membrane proteins PsbA, PsbB, PsbC, PsbD, PsbE, PsbF, PsbH, PsbI, PsbJ, PsbK, PsbL, PsbM, PsbT, PsbX, PsbY, PsbZ, Psb30/Ycf12, at least 3 peripheral proteins of the oxygen-evolving complex and a large number of cofactors. It forms dimeric complexes.

It is found in the plastid. The protein resides in the chloroplast thylakoid membrane. In terms of biological role, one of the components of the core complex of photosystem II (PSII). PSII is a light-driven water:plastoquinone oxidoreductase that uses light energy to abstract electrons from H(2)O, generating O(2) and a proton gradient subsequently used for ATP formation. It consists of a core antenna complex that captures photons, and an electron transfer chain that converts photonic excitation into a charge separation. The polypeptide is Photosystem II reaction center protein J (Thalassiosira pseudonana (Marine diatom)).